The sequence spans 199 residues: Small ribosomal subunit protein uS14m (199 aa).

The segment at 28–67 (LSTPAPEPAKPSSEETTESTEPATSVEDAGEPMKEKRITQ) is disordered.

Belongs to the universal ribosomal protein uS14 family. Component of the mitochondrial ribosome small subunit (28S) which comprises a 12S rRNA and about 30 distinct proteins. Interacts with LIAT1.

The protein resides in the mitochondrion. This is Small ribosomal subunit protein uS14m (mrps-14) from Caenorhabditis elegans.